Reading from the N-terminus, the 376-residue chain is Alanine racemase 1 (376 aa).

Lys-40 serves as the catalytic Proton acceptor; specific for D-alanine. The residue at position 40 (Lys-40) is an N6-(pyridoxal phosphate)lysine. Arg-138 is a substrate binding site. The active-site Proton acceptor; specific for L-alanine is Tyr-268. Met-316 is a substrate binding site.

Belongs to the alanine racemase family. The cofactor is pyridoxal 5'-phosphate.

It catalyses the reaction L-alanine = D-alanine. The protein operates within amino-acid biosynthesis; D-alanine biosynthesis; D-alanine from L-alanine: step 1/1. Functionally, catalyzes the interconversion of L-alanine and D-alanine. May also act on other amino acids. The protein is Alanine racemase 1 (alr1) of Oceanobacillus iheyensis (strain DSM 14371 / CIP 107618 / JCM 11309 / KCTC 3954 / HTE831).